Consider the following 539-residue polypeptide: Transcription factor LG2 (539 aa).

Over residues 115-125 (MRQQQQLHSGN) the composition is skewed to polar residues. Disordered regions lie at residues 115–140 (MRQQ…SAQN) and 181–246 (KPGL…KSRL). 2 stretches are compositionally biased toward low complexity: residues 126 to 137 (SQSVGSTTDSSS) and 192 to 205 (QQQH…QQQL). The segment covering 219-242 (TRKDGKSVDAKTERRLAQNREAAR) has biased composition (basic and acidic residues). Positions 227-271 (DAKTERRLAQNREAARKSRLRKKAYVQNLETSRVRLQQIEQELQR) constitute a bZIP domain. Positions 229–249 (KTERRLAQNREAARKSRLRKK) are basic motif. Positions 255 to 269 (LETSRVRLQQIEQEL) are leucine-zipper. A DOG1 domain is found at 292-506 (AAMFDMEYAR…RALSNLWSSR (215 aa)). Residues 513–539 (GTESVSPTGTELQPMHNQPQQNQYSGF) are disordered.

The protein belongs to the bZIP family. As to quaternary structure, interacts with NPR1/NH1 and NPR3/NH3.

Its subcellular location is the nucleus. Functionally, transcriptional regulator involved in defense response. Acts as a transcriptional activator in vitro. This Oryza sativa subsp. japonica (Rice) protein is Transcription factor LG2.